The following is a 406-amino-acid chain: DNA repair protein RAD55 (406 aa).

An ATP-binding site is contributed by 43–50; that stretch reads GPPGIGKT. The disordered stretch occupies residues 385-406; that stretch reads DSNDNPLPNAEGKEEIIYDSEG.

This sequence belongs to the RecA family. RAD55 subfamily.

It localises to the nucleus. Its function is as follows. Required for radiation resistance and meiotic viability and presumably acts in recombination and recombinational DNA repair pathways. The chain is DNA repair protein RAD55 (RAD55) from Saccharomyces cerevisiae (strain ATCC 204508 / S288c) (Baker's yeast).